Consider the following 233-residue polypeptide: Cilia- and flagella-associated protein 299 (233 aa).

As to expression, abundantly expressed in testis, specifically in spermatogonia and primary spermatocytes but not in secondary spermatocytes and spermatids.

The protein localises to the cytoplasm. The protein resides in the nucleus. In terms of biological role, may be involved in spermatogenesis. The polypeptide is Cilia- and flagella-associated protein 299 (Mus musculus (Mouse)).